The chain runs to 430 residues: Serine--tRNA ligase (430 aa).

235–237 provides a ligand contact to L-serine; the sequence is TAE. ATP-binding positions include 266–268 and Val282; that span reads RRE. An L-serine-binding site is contributed by Glu289. 353 to 356 is an ATP binding site; it reads EASS. Position 389 (Ser389) interacts with L-serine.

Belongs to the class-II aminoacyl-tRNA synthetase family. Type-1 seryl-tRNA synthetase subfamily. As to quaternary structure, homodimer. The tRNA molecule binds across the dimer.

The protein localises to the cytoplasm. It catalyses the reaction tRNA(Ser) + L-serine + ATP = L-seryl-tRNA(Ser) + AMP + diphosphate + H(+). The catalysed reaction is tRNA(Sec) + L-serine + ATP = L-seryl-tRNA(Sec) + AMP + diphosphate + H(+). The protein operates within aminoacyl-tRNA biosynthesis; selenocysteinyl-tRNA(Sec) biosynthesis; L-seryl-tRNA(Sec) from L-serine and tRNA(Sec): step 1/1. Its function is as follows. Catalyzes the attachment of serine to tRNA(Ser). Is also able to aminoacylate tRNA(Sec) with serine, to form the misacylated tRNA L-seryl-tRNA(Sec), which will be further converted into selenocysteinyl-tRNA(Sec). The chain is Serine--tRNA ligase from Chlorobium luteolum (strain DSM 273 / BCRC 81028 / 2530) (Pelodictyon luteolum).